We begin with the raw amino-acid sequence, 327 residues long: Tartrate-resistant acid phosphatase type 5 (327 aa).

The N-terminal stretch at 1–22 (MDTWMVLLGLQILLLPLLAHCT) is a signal peptide. D35, D73, Y76, and N112 together coordinate Fe cation. N-linked (GlcNAc...) asparagine glycans are attached at residues N118 and N149. C163 and C221 form a disulfide bridge. The Fe cation site is built by H207, H242, and H244.

Exists either as monomer or, after proteolytic processing, as a dimer of two chains linked by disulfide bond(s). Fe cation serves as cofactor. Characteristic constituent of osteoclasts and some mononuclear preosteoclasts. Preferentially expressed in skeletal tissues.

It localises to the lysosome. The enzyme catalyses a phosphate monoester + H2O = an alcohol + phosphate. May play a role in the process of bone resorption. The osteoclastic trap acts on nucleotide tri- and diphosphates with higher affinity, compared with other substrates. This Rattus norvegicus (Rat) protein is Tartrate-resistant acid phosphatase type 5 (Acp5).